The sequence spans 277 residues: MALRFYKAYTPGTRNRSVADCSGLTKTRPEKSLTRSMHRAKGRNNRGVITCRHRGGGHKRLYRQIDFRRNKYDMAATVKTIEYDPNRNARIALVEYQDGEKRYILHPNGLEIGDSIIASETAVNAVGNSLPLMAMPLGVQVHNIEMHPKKGGQLVRSAGAVAQLVAKEGEYVTLRLPSGEVRLISNKCWATIGQVGNMEAMNLSLGKAGRSRWLGRRPTVRGSVMNAVDHPHGGGEGRCPVGHAQPRTPWGKPALGVKTRTRKKYSDTLILRRRKVS.

Positions 228–254 (VDHPHGGGEGRCPVGHAQPRTPWGKPA) are disordered.

This sequence belongs to the universal ribosomal protein uL2 family. Part of the 50S ribosomal subunit.

Its subcellular location is the plastid. It localises to the chloroplast. This Ostreococcus tauri protein is Large ribosomal subunit protein uL2c (rpl2).